The chain runs to 316 residues: Retinol dehydrogenase 12 (316 aa).

An NADP(+)-binding site is contributed by G46–G52. S175 is a binding site for substrate. The active-site Proton acceptor is the Y200.

This sequence belongs to the short-chain dehydrogenases/reductases (SDR) family. Widely expressed, mostly in retina, kidney, brain, skeletal muscle, pancreas and stomach.

It is found in the endoplasmic reticulum membrane. The enzyme catalyses all-trans-retinol + NADP(+) = all-trans-retinal + NADPH + H(+). The catalysed reaction is 11-cis-retinol + NADP(+) = 11-cis-retinal + NADPH + H(+). It catalyses the reaction 9-cis-retinol + NADP(+) = 9-cis-retinal + NADPH + H(+). It carries out the reaction a 4-hydroxynonen-1-ol + NADP(+) = a 4-hydroxynonenal + NADPH + H(+). The enzyme catalyses (E)-non-2-en-1-ol + NADP(+) = (E)-non-2-enal + NADPH + H(+). The catalysed reaction is (Z)-non-6-en-1-ol + NADP(+) = (Z)-non-6-enal + NADPH + H(+). It catalyses the reaction nonan-1-ol + NADP(+) = nonanal + NADPH + H(+). The protein operates within cofactor metabolism; retinol metabolism. Its function is as follows. Retinoids dehydrogenase/reductase with a clear preference for NADP. Displays high activity towards 9-cis, 11-cis and all-trans-retinal. Shows very weak activity towards 13-cis-retinol. Also exhibits activity, albeit with lower affinity than for retinaldehydes, towards lipid peroxidation products (C9 aldehydes) such as 4-hydroxynonenal and trans-2-nonenal. May play an important function in photoreceptor cells to detoxify 4-hydroxynonenal and potentially other toxic aldehyde products resulting from lipid peroxidation. Has no dehydrogenase activity towards steroids. The chain is Retinol dehydrogenase 12 (RDH12) from Homo sapiens (Human).